A 99-amino-acid chain; its full sequence is RNA-binding protein Hfq (99 aa).

Residues 9–68 enclose the Sm domain; it reads DPFLNALRRERVPVSIYLVNGIKLQGQIESFDQFVILLKNTVSQMVYKHAISTVVPSRPV. The interval 64 to 99 is disordered; that stretch reads PSRPVSHHSNNPGGSNNYHGSNTTAQQQSQDADDAE. The span at 70 to 93 shows a compositional bias: low complexity; sequence HHSNNPGGSNNYHGSNTTAQQQSQ.

This sequence belongs to the Hfq family. As to quaternary structure, homohexamer.

Its function is as follows. RNA chaperone that binds small regulatory RNA (sRNAs) and mRNAs to facilitate mRNA translational regulation in response to envelope stress, environmental stress and changes in metabolite concentrations. Also binds with high specificity to tRNAs. This chain is RNA-binding protein Hfq, found in Pectobacterium atrosepticum (strain SCRI 1043 / ATCC BAA-672) (Erwinia carotovora subsp. atroseptica).